A 145-amino-acid chain; its full sequence is MYPVHLLVLLAVCVSLLGASNIPPQPLNLYQFGNMIQCANHGRRPTQHYTDYGCYCGKGGSGTPVDELDRCCKTHDDCYTEAGKKGCYPKLTLYSWKCTGKAPTCNSKTGCKRTVCDCDATAAKCFAKAPYNNKNYNIDTKKRCQ.

An N-terminal signal peptide occupies residues 1-19 (MYPVHLLVLLAVCVSLLGA). The propeptide occupies 20-27 (SNIPPQPL). Intrachain disulfides connect Cys38–Cys98, Cys54–Cys144, Cys56–Cys72, Cys71–Cys125, Cys78–Cys118, Cys87–Cys111, and Cys105–Cys116. 3 residues coordinate Ca(2+): Tyr55, Gly57, and Gly59. The active site involves His75. Ca(2+) is bound at residue Asp76. Asp119 is an active-site residue.

It belongs to the phospholipase A2 family. Group I subfamily. D49 sub-subfamily. It depends on Ca(2+) as a cofactor. Expressed by the venom gland.

The protein localises to the secreted. It catalyses the reaction a 1,2-diacyl-sn-glycero-3-phosphocholine + H2O = a 1-acyl-sn-glycero-3-phosphocholine + a fatty acid + H(+). In terms of biological role, snake venom phospholipase A2 (PLA2) that inhibits collagen-induced platelet aggregation. PLA2 catalyzes the calcium-dependent hydrolysis of the 2-acyl groups in 3-sn-phosphoglycerides. The chain is Basic phospholipase A2 S11-61 from Austrelaps superbus (Lowland copperhead snake).